The primary structure comprises 333 residues: Ketol-acid reductoisomerase (NADP(+)) (333 aa).

The region spanning 2-182 (AKIYYDEDAS…GATRAGVIET (181 aa)) is the KARI N-terminal Rossmann domain. NADP(+)-binding positions include 25–28 (YGSQ), serine 51, serine 53, and 83–86 (DTVQ). Residue histidine 108 is part of the active site. Glycine 134 is an NADP(+) binding site. The region spanning 183–327 (TFKEETETDL…EELRKMMPWL (145 aa)) is the KARI C-terminal knotted domain. Residues aspartate 191, glutamate 195, glutamate 227, and glutamate 231 each contribute to the Mg(2+) site. Serine 252 provides a ligand contact to substrate.

Belongs to the ketol-acid reductoisomerase family. Requires Mg(2+) as cofactor.

It catalyses the reaction (2R)-2,3-dihydroxy-3-methylbutanoate + NADP(+) = (2S)-2-acetolactate + NADPH + H(+). It carries out the reaction (2R,3R)-2,3-dihydroxy-3-methylpentanoate + NADP(+) = (S)-2-ethyl-2-hydroxy-3-oxobutanoate + NADPH + H(+). The protein operates within amino-acid biosynthesis; L-isoleucine biosynthesis; L-isoleucine from 2-oxobutanoate: step 2/4. It participates in amino-acid biosynthesis; L-valine biosynthesis; L-valine from pyruvate: step 2/4. In terms of biological role, involved in the biosynthesis of branched-chain amino acids (BCAA). Catalyzes an alkyl-migration followed by a ketol-acid reduction of (S)-2-acetolactate (S2AL) to yield (R)-2,3-dihydroxy-isovalerate. In the isomerase reaction, S2AL is rearranged via a Mg-dependent methyl migration to produce 3-hydroxy-3-methyl-2-ketobutyrate (HMKB). In the reductase reaction, this 2-ketoacid undergoes a metal-dependent reduction by NADPH to yield (R)-2,3-dihydroxy-isovalerate. This chain is Ketol-acid reductoisomerase (NADP(+)), found in Aquifex aeolicus (strain VF5).